The chain runs to 416 residues: 5-hydroxytryptamine receptor 1A-beta (416 aa).

Topologically, residues 1 to 35 are extracellular; sequence MEGTNNTTGWTHFDSTSNRTSKSFDEEVKLSYQVV. N-linked (GlcNAc...) asparagine glycans are attached at residues Asn5, Asn6, and Asn18. The chain crosses the membrane as a helical span at residues 36–56; that stretch reads TSFLLGALILCSIFGNACVVA. Topologically, residues 57 to 70 are cytoplasmic; it reads AIALERSLQNVANY. Residues 71–95 form a helical membrane-spanning segment; the sequence is LIGSLAVTDLMVSVLVLPMAALYQV. The Extracellular segment spans residues 96–104; it reads LNRWTLGQI. Residues 105-129 form a helical membrane-spanning segment; it reads PCDIFISLDMLCCTSSILHLCVIAL. A disulfide bridge links Cys106 with Cys189. Asp113 and Cys117 together coordinate serotonin. Positions 130 to 132 match the DRY motif; important for ligand-induced conformation changes motif; that stretch reads DRY. The Cytoplasmic portion of the chain corresponds to 130 to 149; that stretch reads DRYWAITEPIDYMKKRTPRR. Residues 150 to 171 traverse the membrane as a helical segment; sequence AAVLISVTWLVGFSISIPPMLI. At 172 to 195 the chain is on the extracellular side; that stretch reads MRSQPSSMAEDRANSKQCKITQDP. The chain crosses the membrane as a helical span at residues 196-218; sequence WYTIYSTFGAFYIPLTLMLVLYG. Residues 219-340 lie on the Cytoplasmic side of the membrane; sequence RIFKAARFRI…LARERKTVKT (122 aa). 1D-myo-inositol 4-phosphate is bound by residues Lys339, Thr340, and Gly346. A helical transmembrane segment spans residues 341–364; sequence LGIIMGTFILCWLPFFIVALVMPF. At 365–372 the chain is on the extracellular side; the sequence is CQESCFMP. The helical transmembrane segment at 373–397 threads the bilayer; the sequence is HWLKDVINWLGYSNSLLNPIIYAYF. Residues 390–394 carry the NPxxY motif; important for ligand-induced conformation changes and signaling motif; the sequence is NPIIY. Positions 397, 398, and 399 each coordinate 1D-myo-inositol 4-phosphate. The Cytoplasmic segment spans residues 398-416; sequence NKDFQSAFKKIIKCHFCRA.

Belongs to the G-protein coupled receptor 1 family. 5-hydroxytryptamine receptor subfamily.

It localises to the cell membrane. With respect to regulation, G-protein coupled receptor activity is regulated by lipids: phosphatidylinositol 4-phosphate increases HTR1A-mediated activity. In terms of biological role, G-protein coupled receptor for 5-hydroxytryptamine (serotonin). Also functions as a receptor for various drugs and psychoactive substances. Ligand binding causes a conformation change that triggers signaling via guanine nucleotide-binding proteins (G proteins) and modulates the activity of downstream effectors, such as adenylate cyclase. HTR1A is coupled to G(i)/G(o) G alpha proteins and mediates inhibitory neurotransmission: signaling inhibits adenylate cyclase activity and activates a phosphatidylinositol-calcium second messenger system that regulates the release of Ca(2+) ions from intracellular stores. Beta-arrestin family members regulate signaling by mediating both receptor desensitization and resensitization processes. The protein is 5-hydroxytryptamine receptor 1A-beta (htr1a-B) of Takifugu rubripes (Japanese pufferfish).